Here is a 383-residue protein sequence, read N- to C-terminus: Na(+)/H(+) antiporter NhaA (383 aa).

11 consecutive transmembrane segments (helical) span residues 10-30 (LIGG…NNSP), 56-76 (LMHW…GLEI), 91-111 (IITP…IYLS), 121-141 (GWAI…ALLG), 150-170 (LLVI…IAIF), 174-194 (SLSL…IICN), 206-226 (VVLG…ATLA), 254-274 (PWII…ISFS), 275-295 (GISF…GLFV), 327-347 (GISL…VLAF), and 355-375 (AIKI…YIVL).

Belongs to the NhaA Na(+)/H(+) (TC 2.A.33) antiporter family.

The protein resides in the cell inner membrane. The catalysed reaction is Na(+)(in) + 2 H(+)(out) = Na(+)(out) + 2 H(+)(in). In terms of biological role, na(+)/H(+) antiporter that extrudes sodium in exchange for external protons. This is Na(+)/H(+) antiporter NhaA from Francisella tularensis subsp. novicida (strain U112).